A 200-amino-acid polypeptide reads, in one-letter code: MQLNVNDAQAIEVSELTFGGEFNETLVHQAVVAYMAGGRQGSKQQKTRSDVRGGGKRPWRQKGTGRARAGTIRSPIWRGGGTTFAARPQDHSQKLNKKMYRAALRSILAELVRTDRLVVVQDFAVESPKTKDLLGKLNNMSLTDVLIVSEAVDQNLYLAARNLPHVDVRDVQGSDPVSLIAYDKVLITVSAVKKFEELLG.

Residues 38 to 68 (GRQGSKQQKTRSDVRGGGKRPWRQKGTGRAR) form a disordered region. The segment covering 54–65 (GGKRPWRQKGTG) has biased composition (basic residues).

It belongs to the universal ribosomal protein uL4 family. Part of the 50S ribosomal subunit.

Its function is as follows. One of the primary rRNA binding proteins, this protein initially binds near the 5'-end of the 23S rRNA. It is important during the early stages of 50S assembly. It makes multiple contacts with different domains of the 23S rRNA in the assembled 50S subunit and ribosome. Forms part of the polypeptide exit tunnel. This chain is Large ribosomal subunit protein uL4, found in Pseudomonas fluorescens (strain SBW25).